Consider the following 392-residue polypeptide: Phosphoglycerate kinase (392 aa).

Residues 21-23 (DLN), Arg36, 59-62 (HLGR), Arg114, and Arg147 each bind substrate. Residues Lys198, Glu320, and 346–349 (GGDT) each bind ATP.

The protein belongs to the phosphoglycerate kinase family. In terms of assembly, monomer.

It localises to the cytoplasm. The enzyme catalyses (2R)-3-phosphoglycerate + ATP = (2R)-3-phospho-glyceroyl phosphate + ADP. Its pathway is carbohydrate degradation; glycolysis; pyruvate from D-glyceraldehyde 3-phosphate: step 2/5. The chain is Phosphoglycerate kinase from Nitrosomonas europaea (strain ATCC 19718 / CIP 103999 / KCTC 2705 / NBRC 14298).